We begin with the raw amino-acid sequence, 294 residues long: 4-hydroxy-tetrahydrodipicolinate synthase (294 aa).

Thr-45 provides a ligand contact to pyruvate. The active-site Proton donor/acceptor is the Tyr-133. The active-site Schiff-base intermediate with substrate is the Lys-162. Ile-204 contributes to the pyruvate binding site.

This sequence belongs to the DapA family. In terms of assembly, homotetramer; dimer of dimers.

It is found in the cytoplasm. It catalyses the reaction L-aspartate 4-semialdehyde + pyruvate = (2S,4S)-4-hydroxy-2,3,4,5-tetrahydrodipicolinate + H2O + H(+). The protein operates within amino-acid biosynthesis; L-lysine biosynthesis via DAP pathway; (S)-tetrahydrodipicolinate from L-aspartate: step 3/4. Functionally, catalyzes the condensation of (S)-aspartate-beta-semialdehyde [(S)-ASA] and pyruvate to 4-hydroxy-tetrahydrodipicolinate (HTPA). This chain is 4-hydroxy-tetrahydrodipicolinate synthase, found in Bartonella henselae (strain ATCC 49882 / DSM 28221 / CCUG 30454 / Houston 1) (Rochalimaea henselae).